A 253-amino-acid polypeptide reads, in one-letter code: Vacuolar v-SNARE NYV1 (253 aa).

The Cytoplasmic portion of the chain corresponds to 1-231; it reads MKRFNVSYVE…EIMWWQKVKN (231 aa). Residues 147-166 are disordered; sequence LNSSGNGQSSNGNGQNTISD. Residues 148 to 162 are compositionally biased toward low complexity; it reads NSSGNGQSSNGNGQN. In terms of domain architecture, v-SNARE coiled-coil homology spans 167-227; the sequence is IGDATEDQIK…VNIKEIMWWQ (61 aa). Residues 232 to 252 form a helical; Anchor for type IV membrane protein membrane-spanning segment; sequence ITLLTFTIILFVSAAFMFFYL. Residue Trp-253 is a topological domain, vacuolar.

The protein belongs to the synaptobrevin family. Present in a pentameric cis-SNARE complex composed of the v-SNAREs NYV1, VTI1 and YKT6, and the t-SNAREs VAM3 and VAM7 on vacuolar membranes. Interacts in trans with the cognate t-SNARE VAM3 during the docking step of homotypic vacuolar fusion. Interacts with the vacuolar transporter chaperone (VTC) complex and the vacuolar Ca(2+)-ATPase PMC1.

It localises to the vacuole membrane. Its function is as follows. Vacuolar v-SNARE required for docking. Only involved in homotypic vacuole fusion. Required for Ca(2+) efflux from the vacuolar lumen, a required signal for subsequent membrane fusion events, by inhibiting vacuolar Ca(2+)-ATPase PMC1 and promoting Ca(2+) release when forming trans-SNARE assemblies during the docking step. This Saccharomyces cerevisiae (strain ATCC 204508 / S288c) (Baker's yeast) protein is Vacuolar v-SNARE NYV1 (NYV1).